We begin with the raw amino-acid sequence, 191 residues long: uncharacterized protein (191 aa).

The tract at residues 52-112 (NKQENQTESS…TNKDTNIETN (61 aa)) is disordered. Residues 57–70 (QTESSDLNNTDSLV) are compositionally biased toward polar residues. The span at 71-94 (DSNSDNQTNTTDTSTNNVENLNEN) shows a compositional bias: low complexity. A coiled-coil region spans residues 138–172 (QDKISDTERIRFLEEKVSKLERKIRTLSLQMTKIS).

This is an uncharacterized protein from Acanthamoeba polyphaga mimivirus (APMV).